The sequence spans 559 residues: Asparagine--tRNA ligase, cytoplasmic (559 aa).

Serine 72 is subject to Phosphoserine. N6-acetyllysine occurs at positions 255 and 501.

Belongs to the class-II aminoacyl-tRNA synthetase family.

Its subcellular location is the cytoplasm. The enzyme catalyses tRNA(Asn) + L-asparagine + ATP = L-asparaginyl-tRNA(Asn) + AMP + diphosphate + H(+). The chain is Asparagine--tRNA ligase, cytoplasmic (NARS) from Bos taurus (Bovine).